The following is a 195-amino-acid chain: Molybdenum cofactor guanylyltransferase (195 aa).

Residues 12 to 14 (LAG), K25, N53, D70, and D100 each bind GTP. A Mg(2+)-binding site is contributed by D100.

Belongs to the MobA family. Monomer. It depends on Mg(2+) as a cofactor.

It localises to the cytoplasm. The enzyme catalyses Mo-molybdopterin + GTP + H(+) = Mo-molybdopterin guanine dinucleotide + diphosphate. Transfers a GMP moiety from GTP to Mo-molybdopterin (Mo-MPT) cofactor (Moco or molybdenum cofactor) to form Mo-molybdopterin guanine dinucleotide (Mo-MGD) cofactor. The chain is Molybdenum cofactor guanylyltransferase from Vibrio parahaemolyticus serotype O3:K6 (strain RIMD 2210633).